The sequence spans 469 residues: Lipase A (469 aa).

Residues 1 to 22 (MMFLTQLVSALFLFFLGPISYG) form the signal peptide. Residues 40-51 (PSEDPFYQPPPG) are compositionally biased toward pro residues. The interval 40–59 (PSEDPFYQPPPGYEETEPGT) is disordered. N-linked (GlcNAc...) asparagine glycosylation is present at asparagine 111. A disulfide bond links cysteine 129 and cysteine 304. Residues serine 217, aspartate 361, and histidine 393 each act as charge relay system in the active site. Cysteine 377 and cysteine 421 form a disulfide bridge.

The protein belongs to the AB hydrolase superfamily. Lipase family. Class Lip subfamily. In terms of assembly, monomer.

It localises to the secreted. It carries out the reaction a triacylglycerol + H2O = a diacylglycerol + a fatty acid + H(+). Its function is as follows. Hydrolyzes triglycerides, with a preference for substrates with short-chain lengths (C4 to C8). The chain is Lipase A from Arthroderma benhamiae (strain ATCC MYA-4681 / CBS 112371) (Trichophyton mentagrophytes).